Consider the following 1069-residue polypeptide: Rab GTPase-activating protein 1 (1069 aa).

Positions 1-79 are disordered; it reads MDDKASVGKI…DPPMDDQPGE (79 aa). The span at 7–22 shows a compositional bias: low complexity; it reads VGKISVSSDSVSTLNS. Position 42 is a phosphoserine (Ser-42). Residues 142–298 enclose the PID domain; the sequence is EDSVVFSKLT…IFTFSVSLEI (157 aa). At Ser-360 the chain carries Phosphoserine. The segment at 482–527 is disordered; that stretch reads ERERRKTTASPSVRLPQSGSQSSVIPSPPEDDEEEDNDEPLLSGSG. Residues 489–506 show a composition bias toward polar residues; it reads TASPSVRLPQSGSQSSVI. Residues 510–520 show a composition bias toward acidic residues; sequence PEDDEEEDNDE. Residues 566 to 752 form the Rab-GAP TBC domain; that stretch reads GVPEALRGEV…HIIDLLLCEG (187 aa). The stretch at 798 to 1047 forms a coiled coil; the sequence is KKLMELACNM…ALNEVQAAKK (250 aa). A Phosphothreonine modification is found at Thr-996.

As to quaternary structure, interacts with RAB6A and tubulin gamma.

Its subcellular location is the cytoplasm. The protein localises to the cytosol. It is found in the cytoskeleton. It localises to the microtubule organizing center. The protein resides in the centrosome. Its function is as follows. May act as a GTPase-activating protein of RAB6A. May play a role in microtubule nucleation by centrosome. May participate in a RAB6A-mediated pathway involved in the metaphase-anaphase transition. In Homo sapiens (Human), this protein is Rab GTPase-activating protein 1 (RABGAP1).